A 543-amino-acid polypeptide reads, in one-letter code: CTP synthase (543 aa).

The tract at residues 1-265 (MTRFVFITGG…DQEVLRYFDL (265 aa)) is amidoligase domain. CTP is bound at residue serine 13. Position 13 (serine 13) interacts with UTP. 14 to 19 (SLGKGI) contacts ATP. Tyrosine 54 is a binding site for L-glutamine. An ATP-binding site is contributed by aspartate 71. Mg(2+) contacts are provided by aspartate 71 and glutamate 139. Residues 146-148 (DIE), 186-191 (KTKPTQ), and lysine 222 contribute to the CTP site. UTP is bound by residues 186-191 (KTKPTQ) and lysine 222. The Glutamine amidotransferase type-1 domain maps to 291–542 (RVAIVGKYTA…IAAAVKEAHR (252 aa)). Glycine 354 serves as a coordination point for L-glutamine. Cysteine 381 functions as the Nucleophile; for glutamine hydrolysis in the catalytic mechanism. Residues 382 to 385 (FGMQ), glutamate 405, and arginine 470 contribute to the L-glutamine site. Catalysis depends on residues histidine 515 and glutamate 517.

The protein belongs to the CTP synthase family. Homotetramer.

The enzyme catalyses UTP + L-glutamine + ATP + H2O = CTP + L-glutamate + ADP + phosphate + 2 H(+). The catalysed reaction is L-glutamine + H2O = L-glutamate + NH4(+). It catalyses the reaction UTP + NH4(+) + ATP = CTP + ADP + phosphate + 2 H(+). Its pathway is pyrimidine metabolism; CTP biosynthesis via de novo pathway; CTP from UDP: step 2/2. Its activity is regulated as follows. Allosterically activated by GTP, when glutamine is the substrate; GTP has no effect on the reaction when ammonia is the substrate. The allosteric effector GTP functions by stabilizing the protein conformation that binds the tetrahedral intermediate(s) formed during glutamine hydrolysis. Inhibited by the product CTP, via allosteric rather than competitive inhibition. Functionally, catalyzes the ATP-dependent amination of UTP to CTP with either L-glutamine or ammonia as the source of nitrogen. Regulates intracellular CTP levels through interactions with the four ribonucleotide triphosphates. This Gluconobacter oxydans (strain 621H) (Gluconobacter suboxydans) protein is CTP synthase.